The following is a 493-amino-acid chain: Probable cytochrome P450 6a13 (493 aa).

Cys-435 is a binding site for heme.

Belongs to the cytochrome P450 family. Heme serves as cofactor.

It localises to the endoplasmic reticulum membrane. The protein resides in the microsome membrane. In terms of biological role, may be involved in the metabolism of insect hormones and in the breakdown of synthetic insecticides. The protein is Probable cytochrome P450 6a13 (Cyp6a13) of Drosophila melanogaster (Fruit fly).